Reading from the N-terminus, the 370-residue chain is Pyruvate dehydrogenase E1 component subunit alpha (370 aa).

As to quaternary structure, heterodimer of an alpha and a beta chain. The cofactor is thiamine diphosphate.

It carries out the reaction N(6)-[(R)-lipoyl]-L-lysyl-[protein] + pyruvate + H(+) = N(6)-[(R)-S(8)-acetyldihydrolipoyl]-L-lysyl-[protein] + CO2. Its function is as follows. The pyruvate dehydrogenase complex catalyzes the overall conversion of pyruvate to acetyl-CoA and CO(2). It contains multiple copies of three enzymatic components: pyruvate dehydrogenase (E1), dihydrolipoamide acetyltransferase (E2) and lipoamide dehydrogenase (E3). This chain is Pyruvate dehydrogenase E1 component subunit alpha (pdhA), found in Staphylococcus aureus (strain COL).